Here is a 320-residue protein sequence, read N- to C-terminus: uncharacterized protein (320 aa).

The FHA domain occupies 22 to 86; the sequence is KTIGRSSSFD…IRDLNNKTGT (65 aa). Positions 242-264 are disordered; it reads TDTDTTEEKEEEEEKEEGDDEEG.

This is an uncharacterized protein from Saccharomyces cerevisiae (strain ATCC 204508 / S288c) (Baker's yeast).